Here is a 156-residue protein sequence, read N- to C-terminus: Arginine repressor (156 aa).

The protein belongs to the ArgR family.

It is found in the cytoplasm. It participates in amino-acid biosynthesis; L-arginine biosynthesis [regulation]. Its function is as follows. Regulates arginine biosynthesis genes. This Yersinia enterocolitica serotype O:8 / biotype 1B (strain NCTC 13174 / 8081) protein is Arginine repressor.